Consider the following 412-residue polypeptide: Stachydrine N-demethylase (412 aa).

In terms of domain architecture, Rieske spans 45–150; the sequence is LYAVPVCQLA…LRNLDGLIYI (106 aa). [2Fe-2S] cluster contacts are provided by Cys86, His88, Cys106, and His109. The Fe cation site is built by His204, His209, and Asp360.

It belongs to the bacterial ring-hydroxylating dioxygenase alpha subunit family. As to quaternary structure, homotrimer. The system is probably composed of an oxygenase subunit (Stc2) and two reductase subunits (Stc3 and Stc4). [2Fe-2S] cluster is required as a cofactor. The cofactor is Fe cation.

The catalysed reaction is L-proline betaine + NADH + O2 + H(+) = N-methyl-L-proline + formaldehyde + NAD(+) + H2O. It catalyses the reaction L-proline betaine + NADPH + O2 + H(+) = N-methyl-L-proline + formaldehyde + NADP(+) + H2O. Its function is as follows. Monooxygenase involved in the catabolism of stachydrine (L-proline betaine), a source of carbon and nitrogen. Part of a Rieske-type oxygenase system that catalyzes the demethylation of stachydrine to produce N-methyl-L-proline (monomethylproline). Stc2 is the catalytic subunit. In Rhizobium meliloti (strain 1021) (Ensifer meliloti), this protein is Stachydrine N-demethylase.